The chain runs to 205 residues: High frequency lysogenization protein HflD homolog (205 aa).

Belongs to the HflD family.

It localises to the cytoplasm. It is found in the cell inner membrane. The sequence is that of High frequency lysogenization protein HflD homolog from Vibrio campbellii (strain ATCC BAA-1116).